The primary structure comprises 255 residues: 3-deoxy-manno-octulosonate cytidylyltransferase (255 aa).

This sequence belongs to the KdsB family.

It localises to the cytoplasm. It carries out the reaction 3-deoxy-alpha-D-manno-oct-2-ulosonate + CTP = CMP-3-deoxy-beta-D-manno-octulosonate + diphosphate. It functions in the pathway nucleotide-sugar biosynthesis; CMP-3-deoxy-D-manno-octulosonate biosynthesis; CMP-3-deoxy-D-manno-octulosonate from 3-deoxy-D-manno-octulosonate and CTP: step 1/1. Its pathway is bacterial outer membrane biogenesis; lipopolysaccharide biosynthesis. Its function is as follows. Activates KDO (a required 8-carbon sugar) for incorporation into bacterial lipopolysaccharide in Gram-negative bacteria. This Polaromonas sp. (strain JS666 / ATCC BAA-500) protein is 3-deoxy-manno-octulosonate cytidylyltransferase.